Consider the following 112-residue polypeptide: Large ribosomal subunit protein eL22 (112 aa).

Belongs to the eukaryotic ribosomal protein eL22 family. As to quaternary structure, component of the large ribosomal subunit.

It is found in the cytoplasm. In Encephalitozoon cuniculi (strain GB-M1) (Microsporidian parasite), this protein is Large ribosomal subunit protein eL22 (RPL22).